Here is a 451-residue protein sequence, read N- to C-terminus: D(1A) dopamine receptor (451 aa).

Residues 1 to 22 are Extracellular-facing; that stretch reads MTFNITSMDEDVLLTERESSFR. N4 carries N-linked (GlcNAc...) asparagine glycosylation. Residues 23–48 form a helical membrane-spanning segment; sequence VLTGCFLSVLILSTLLGNTLVCAAVI. Residues 49–59 lie on the Cytoplasmic side of the membrane; it reads RFRHLRSKVTN. Residues 60–86 traverse the membrane as a helical segment; that stretch reads FFVISLAVSDLLVAVLVMPWKAVAEIA. At 87–95 the chain is on the extracellular side; it reads GFWPFGTFC. The cysteines at positions 95 and 185 are disulfide-linked. Residues 96–118 traverse the membrane as a helical segment; it reads NIWVAFDIMCSTASILNLCVISV. At 119–137 the chain is on the cytoplasmic side; it reads DRYWAISSPFRYERKMTPK. A helical transmembrane segment spans residues 138 to 162; that stretch reads VAFIMIGVAWTLSVLISFIPVQLNW. Topologically, residues 163–191 are extracellular; sequence HKAKTTSFFDLNITLHDRTMDNCDSSLNR. A helical membrane pass occupies residues 192–217; that stretch reads TYAISSSLISFYIPVAIMIVTYTRIY. At 218–271 the chain is on the cytoplasmic side; sequence RIAAKQIRRISALERAAVHAKNCQNSTSNRNSLDCQQPESSLKTSFKRETKVLK. Residues 272–298 form a helical membrane-spanning segment; that stretch reads TLSVIMGVFVCCWLPFFILNCIVPFCD. The Extracellular portion of the chain corresponds to 299–315; sequence PSLTTSGTEPFCISSTT. Residues 316–340 traverse the membrane as a helical segment; it reads FDVFVWFGWANSSLNPIIYAFNADF. Over 341–451 the chain is Cytoplasmic; it reads RKAFSNLLGC…PITQNGQPKT (111 aa). A lipid anchor (S-palmitoyl cysteine) is attached at C350.

Belongs to the G-protein coupled receptor 1 family. As to expression, brain.

The protein resides in the cell membrane. Its subcellular location is the cell projection. It is found in the cilium membrane. Dopamine receptor whose activity is mediated by G proteins which activate adenylyl cyclase. The protein is D(1A) dopamine receptor (drd1) of Xenopus laevis (African clawed frog).